Consider the following 324-residue polypeptide: Sex-lethal homolog (324 aa).

2 consecutive RRM domains span residues 102 to 180 (TNLI…YARP) and 188 to 268 (TNLY…LAEE).

As to expression, expressed in somatic cells of both sexes throughout development, but not in the pole cells which are the progenitors of the germline.

Its subcellular location is the nucleus. In terms of biological role, unknown; apparently not involved in somatic sex determination. This chain is Sex-lethal homolog (SXL), found in Musca domestica (House fly).